The chain runs to 710 residues: Chaperonin-containing T-complex member BBS12 (710 aa).

This sequence belongs to the TCP-1 chaperonin family. BBS12 subfamily. As to quaternary structure, component of the chaperonin-containing T-complex (TRiC), a heterooligomeric complex of about 850 to 900 kDa that forms two stacked rings, 12 to 16 nm in diameter. Interacts with MKKS.

It localises to the cell projection. Its subcellular location is the cilium. Its function is as follows. Component of the chaperonin-containing T-complex (TRiC), a molecular chaperone complex that assists the folding of proteins upon ATP hydrolysis. As part of the TRiC complex may play a role in the assembly of BBSome, a complex involved in ciliogenesis regulating transports vesicles to the cilia. Involved in adipogenic differentiation. This is Chaperonin-containing T-complex member BBS12 (BBS12) from Homo sapiens (Human).